The primary structure comprises 480 residues: Zinc finger protein ztf-16 (480 aa).

Residues 5-27 (NACTECGFTTTVFSEFQGHIEKH) form a C2H2-type 1 zinc finger. Residues 25-75 (EKHENEHSRSSSGEMSNSQTIEWGDGIQSSTPSPRSTPPSDPTPSPDSDEH) are disordered. Polar residues predominate over residues 34-45 (SSSGEMSNSQTI). The span at 59–69 (RSTPPSDPTPS) shows a compositional bias: pro residues. 5 C2H2-type zinc fingers span residues 103 to 125 (HVCPHCNFTTCMSQHMKSHLEAH), 133 to 155 (YQCDICKMQFSQKANMHRHRMRH), 161 to 183 (YECRFCKKRFFRKDQMQEHSMTH), 190 to 215 (FDCPVSQCNMQFSQHNALRAHLEETH), and 223 to 246 (ASCKRCNLMFANSRRLLLHFQTRH). Disordered stretches follow at residues 243 to 275 (QTRHDDSESSPKKENTPKRKKLSNGNALPMDPA), 290 to 311 (EFSPPNTDTSDNSTSSEFDKIP), and 376 to 417 (TSSS…KEDE). Residues 244–259 (TRHDDSESSPKKENTP) are compositionally biased toward basic and acidic residues. 2 stretches are compositionally biased toward low complexity: residues 292 to 305 (SPPNTDTSDNSTSS) and 376 to 403 (TSSSVSVSAPSPSEQSHSPPANESSLSL). Residues 404–413 (TEKEKSPTPE) are compositionally biased toward basic and acidic residues. 2 consecutive C2H2-type zinc fingers follow at residues 420–442 (VECCHCGMMFYDNTMYLLHKSLH) and 448–472 (FKCALCGTQCGEKYMFTTHVIFADH).

This sequence belongs to the Ikaros C2H2-type zinc-finger protein family. Expressed in the somatic gonad, hypodermis and cells in the head and tail. Expressed in amphid and phasmid sheath glia, amphid and phasmid socket glia, and in neurons in the head.

It is found in the nucleus. Positively regulates the expression of ver-1 in the amphid sheath glia of amphid sensory neurons. Together with ehn-3, plays a role in somatic gonad development and is required for proper gonadal primordium assembly and somatic gonad precursor cell morphology. The polypeptide is Zinc finger protein ztf-16 (Caenorhabditis elegans).